The sequence spans 93 residues: Putative pterin-4-alpha-carbinolamine dehydratase (93 aa).

The protein belongs to the pterin-4-alpha-carbinolamine dehydratase family.

It carries out the reaction (4aS,6R)-4a-hydroxy-L-erythro-5,6,7,8-tetrahydrobiopterin = (6R)-L-erythro-6,7-dihydrobiopterin + H2O. The sequence is that of Putative pterin-4-alpha-carbinolamine dehydratase from Mycolicibacterium vanbaalenii (strain DSM 7251 / JCM 13017 / BCRC 16820 / KCTC 9966 / NRRL B-24157 / PYR-1) (Mycobacterium vanbaalenii).